Consider the following 335-residue polypeptide: NADP(+)-dependent glycerol-3-phosphate dehydrogenase (335 aa).

Gly137 provides a ligand contact to sn-glycerol 3-phosphate. Ala141 lines the NADPH pocket. Positions 192, 250, 259, and 260 each coordinate sn-glycerol 3-phosphate. Residue Lys192 is the Proton acceptor of the active site. Arg259 serves as a coordination point for NADPH. The NADPH site is built by Val287 and Glu289.

The protein belongs to the NAD-dependent glycerol-3-phosphate dehydrogenase family. In terms of assembly, homodimer.

Its subcellular location is the cytoplasm. It catalyses the reaction sn-glycerol 3-phosphate + NADP(+) = dihydroxyacetone phosphate + NADPH + H(+). Functionally, catalyzes the reduction of the glycolytic intermediate dihydroxyacetone phosphate (DHAP) to sn-glycerol 3-phosphate (G3P). Shows a 15-fold preference for NADPH over NADH in the reduction process. Can also catalyze the reverse reaction in vitro. Shows no activity with dihydroxyacetone, glycerol, glycerol-2-phosphate, D-glyceraldehyde-3-phosphate, DL-glyceraldehyde, D-erythrose-4-phosphate, D-fructose-6-phosphate, beta-D-glucose-6-phosphate, or alpha-D-galactose-1-phosphate. This Archaeoglobus fulgidus (strain ATCC 49558 / DSM 4304 / JCM 9628 / NBRC 100126 / VC-16) protein is NADP(+)-dependent glycerol-3-phosphate dehydrogenase.